The following is a 242-amino-acid chain: UDP-2,3-diacylglucosamine hydrolase (242 aa).

Aspartate 8, histidine 10, aspartate 41, asparagine 79, and histidine 114 together coordinate Mn(2+). 79-80 (NR) is a substrate binding site. Residues aspartate 122, lysine 164, lysine 167, and histidine 195 each coordinate substrate. Mn(2+)-binding residues include histidine 195 and histidine 197.

Belongs to the LpxH family. The cofactor is Mn(2+).

Its subcellular location is the cell inner membrane. It catalyses the reaction UDP-2-N,3-O-bis[(3R)-3-hydroxytetradecanoyl]-alpha-D-glucosamine + H2O = 2-N,3-O-bis[(3R)-3-hydroxytetradecanoyl]-alpha-D-glucosaminyl 1-phosphate + UMP + 2 H(+). It participates in glycolipid biosynthesis; lipid IV(A) biosynthesis; lipid IV(A) from (3R)-3-hydroxytetradecanoyl-[acyl-carrier-protein] and UDP-N-acetyl-alpha-D-glucosamine: step 4/6. Functionally, hydrolyzes the pyrophosphate bond of UDP-2,3-diacylglucosamine to yield 2,3-diacylglucosamine 1-phosphate (lipid X) and UMP by catalyzing the attack of water at the alpha-P atom. Involved in the biosynthesis of lipid A, a phosphorylated glycolipid that anchors the lipopolysaccharide to the outer membrane of the cell. In Vibrio cholerae serotype O1 (strain ATCC 39315 / El Tor Inaba N16961), this protein is UDP-2,3-diacylglucosamine hydrolase.